The sequence spans 1219 residues: Pleckstrin homology domain-containing family G member 3 (1219 aa).

Over residues 1 to 10 (MPVSTSLHQD) the composition is skewed to polar residues. The disordered stretch occupies residues 1–66 (MPVSTSLHQD…HLPNSNNNSS (66 aa)). Positions 18 to 46 (SLTSTTSSSGSSCDSRSAMEEPSSSEAPA) are enriched in low complexity. A Phosphoserine modification is found at Ser-76. The DH domain occupies 93-272 (YLGRVVREIV…TCVAWYINDM (180 aa)). In terms of domain architecture, PH spans 296-394 (DLTTYGELVL…WTHHIKRLIL (99 aa)). Over residues 431–442 (WSSQDEVSTNVR) the composition is skewed to polar residues. 2 disordered regions span residues 431 to 599 (WSSQ…PSVL) and 613 to 708 (FSRR…KESA). Ser-433 is modified (phosphoserine). The span at 446–463 (RQSEPTKHLLRQLNEKAR) shows a compositional bias: basic and acidic residues. Phosphoserine is present on residues Ser-576, Ser-577, Ser-618, Ser-631, Ser-640, Ser-643, and Ser-647. Residues 630 to 645 (GSPRLVSRSSSVLSLE) are compositionally biased toward low complexity. Over residues 696-708 (EPDRSSCKKKESA) the composition is skewed to basic and acidic residues. Phosphoserine occurs at positions 741, 779, and 827. Disordered stretches follow at residues 756 to 780 (RFNSLPRPDPEPVPPVGSKRQVGSR), 821 to 840 (MESSGGSPGKGPGQGQANGF), 859 to 878 (EESATASPESSSPTEGRSPA), 955 to 1133 (APER…LYVT), and 1146 to 1207 (VMEK…RVRN). The segment covering 826-836 (GSPGKGPGQGQ) has biased composition (gly residues). Residues 859-873 (EESATASPESSSPTE) show a composition bias toward low complexity. Phosphoserine occurs at positions 962, 1011, 1023, 1037, and 1040. Positions 1020–1029 (SAVSQRTTSP) are enriched in polar residues. The segment covering 1049-1065 (DVRELCSKYASRDEARR) has biased composition (basic and acidic residues). Ser-1081 is subject to Phosphoserine. Omega-N-methylarginine is present on Arg-1107. The span at 1187-1197 (QPKEEGSRDPA) shows a compositional bias: basic and acidic residues.

It localises to the cytoplasm. The protein localises to the cytoskeleton. Plays a role in controlling cell polarity and cell motility by selectively binding newly polymerized actin and activating RAC1 and CDC42 to enhance local actin polymerization. The polypeptide is Pleckstrin homology domain-containing family G member 3 (Homo sapiens (Human)).